The chain runs to 1026 residues: uncharacterized protein (1026 aa).

WD repeat units follow at residues 14–53 (LLDE…HFTL), 62–104 (HSVS…RRAT), 148–187 (GHED…LTFK), and 937–977 (NAEC…VKFL).

It localises to the cytoplasm. The protein localises to the nucleus. This is an uncharacterized protein from Schizosaccharomyces pombe (strain 972 / ATCC 24843) (Fission yeast).